A 218-amino-acid polypeptide reads, in one-letter code: Octanoyltransferase (218 aa).

A BPL/LPL catalytic domain is found at 32–214 (VLTADEIWLV…HFTQLLGYND (183 aa)). Substrate contacts are provided by residues 71–78 (RGGQITYH), 143–145 (SLG), and 156–158 (GLA). Cysteine 174 acts as the Acyl-thioester intermediate in catalysis.

It belongs to the LipB family.

The protein localises to the cytoplasm. The catalysed reaction is octanoyl-[ACP] + L-lysyl-[protein] = N(6)-octanoyl-L-lysyl-[protein] + holo-[ACP] + H(+). Its pathway is protein modification; protein lipoylation via endogenous pathway; protein N(6)-(lipoyl)lysine from octanoyl-[acyl-carrier-protein]: step 1/2. Its function is as follows. Catalyzes the transfer of endogenously produced octanoic acid from octanoyl-acyl-carrier-protein onto the lipoyl domains of lipoate-dependent enzymes. Lipoyl-ACP can also act as a substrate although octanoyl-ACP is likely to be the physiological substrate. The chain is Octanoyltransferase from Histophilus somni (strain 2336) (Haemophilus somnus).